The primary structure comprises 450 residues: Gluconate permease (450 aa).

Helical transmembrane passes span 6–26, 30–50, 60–80, 116–136, 142–162, 183–203, 233–253, 269–289, 312–332, 338–358, 366–386, and 430–450; these read HDAYLLLDALVTIIGLIVLIT, VHPFIALIIAAGFLGLTSGMP, DGFGGVLGFVGVILALGTMLG, VGIPLFFEIGFILLIPLVFIV, VSLIKIGIPLLAGLSAVHGLV, ILYGLIVALPTAAIAGPLFGA, FGVTLATVLLPVFLMLLKTFA, MIGHPISALLLALLVALYTFG, AIVMIIGAGGGFKQMLVASGV, HLAVNAQISPILLAWLVAAVI, TVATITGAGIVVPVIDLIPGV, and AMETILSVVGLVFILLLSLVL.

Belongs to the GntP permease family.

It localises to the cell inner membrane. It participates in carbohydrate acid metabolism; D-gluconate degradation. In Pseudomonas aeruginosa (strain ATCC 15692 / DSM 22644 / CIP 104116 / JCM 14847 / LMG 12228 / 1C / PRS 101 / PAO1), this protein is Gluconate permease (gnuT).